The primary structure comprises 222 residues: UPF0758 protein CT0611 (222 aa).

Residues 100 to 222 (KVKGARDVFE…WFSFRDHALL (123 aa)) form the MPN domain. The Zn(2+) site is built by His-171, His-173, and Asp-184. The short motif at 171–184 (HNHPSGDVQPSNAD) is the JAMM motif element.

This sequence belongs to the UPF0758 family.

This Chlorobaculum tepidum (strain ATCC 49652 / DSM 12025 / NBRC 103806 / TLS) (Chlorobium tepidum) protein is UPF0758 protein CT0611.